Consider the following 321-residue polypeptide: Biotin synthase (321 aa).

Residues 44 to 273 form the Radical SAM core domain; the sequence is FCGNVFDLCT…DGFVRIAAGR (230 aa). The [4Fe-4S] cluster site is built by Cys-62, Cys-66, and Cys-69. [2Fe-2S] cluster contacts are provided by Ser-106, Cys-138, Cys-198, and Arg-268.

The protein belongs to the radical SAM superfamily. Biotin synthase family. Homodimer. [4Fe-4S] cluster is required as a cofactor. It depends on [2Fe-2S] cluster as a cofactor.

The catalysed reaction is (4R,5S)-dethiobiotin + (sulfur carrier)-SH + 2 reduced [2Fe-2S]-[ferredoxin] + 2 S-adenosyl-L-methionine = (sulfur carrier)-H + biotin + 2 5'-deoxyadenosine + 2 L-methionine + 2 oxidized [2Fe-2S]-[ferredoxin]. It functions in the pathway cofactor biosynthesis; biotin biosynthesis; biotin from 7,8-diaminononanoate: step 2/2. In terms of biological role, catalyzes the conversion of dethiobiotin (DTB) to biotin by the insertion of a sulfur atom into dethiobiotin via a radical-based mechanism. The sequence is that of Biotin synthase from Akkermansia muciniphila (strain ATCC BAA-835 / DSM 22959 / JCM 33894 / BCRC 81048 / CCUG 64013 / CIP 107961 / Muc).